The sequence spans 284 residues: Transmembrane protein 163b (284 aa).

The segment at 1 to 44 is disordered; it reads MTDSSSASDPTAGPVDPGPAPSAPDPALEDPASTPANGHHPNQA. The Cytoplasmic segment spans residues 1-83; that stretch reads MTDSSSASDP…HEAQSYRKKA (83 aa). A helical transmembrane segment spans residues 84 to 104; sequence LWVSWVSIVVTMILAIAAFTV. Over 105–111 the chain is Extracellular; it reads SIMRHSA. A helical transmembrane segment spans residues 112–132; it reads SAFGFAFDATLDVLSSIIVLW. The Cytoplasmic segment spans residues 133 to 145; sequence RYSNAAAVHSAHR. Residues 146 to 166 form a helical membrane-spanning segment; sequence EYIACVILGVVFILSAITILV. Residues 167–182 are Extracellular-facing; that stretch reads KAIHDLATKLEPEVDD. Residues 183–203 traverse the membrane as a helical segment; it reads FLYSVSVISGVVCTVLCVCKF. The Cytoplasmic portion of the chain corresponds to 204–212; that stretch reads MLGKVLTSR. The helical transmembrane segment at 213 to 233 threads the bilayer; that stretch reads ALITDGFNSLVGGVMGFSILI. The Extracellular segment spans residues 234 to 243; the sequence is SAEVFKHEPS. Residues 244–264 form a helical membrane-spanning segment; it reads VWFLDGTIGILIGLIILAYGV. Topologically, residues 265–284 are cytoplasmic; it reads KLLKDMVPRIRQTRHYERFE.

Belongs to the TMEM163 family.

It is found in the cytoplasmic vesicle. Its subcellular location is the secretory vesicle. The protein localises to the synaptic vesicle membrane. The protein resides in the early endosome membrane. It localises to the late endosome membrane. It is found in the lysosome membrane. Its subcellular location is the cell membrane. It catalyses the reaction Zn(2+)(in) = Zn(2+)(out). Zinc ion transporter that mediates zinc efflux and plays a crucial role in intracellular zinc homeostasis. Binds the divalent cations Zn(2+), Ni(2+), and to a minor extent Cu(2+). Is a functional modulator of P2X purinoceptors, including P2RX1, P2RX3, P2RX4 and P2RX7. Plays a role in central nervous system development and is required for myelination, and survival and proliferation of oligodendrocytes. The sequence is that of Transmembrane protein 163b from Danio rerio (Zebrafish).